The following is a 418-amino-acid chain: Elongation factor 1-gamma 2 (418 aa).

The region spanning 1–82 is the GST N-terminal domain; it reads MALVLHAGSG…YVTRSKADNP (82 aa). The 129-residue stretch at 87 to 215 folds into the GST C-terminal domain; that stretch reads SLIEYAHIEQ…VKQAESVPPV (129 aa). Residues 210–265 are disordered; that stretch reads ESVPPVQKKAPPPKEQKPKEAKKEAPKEAPKPKAVEKPEEEEEAPKPKPKNPLDLL. Over residues 221–246 the composition is skewed to basic and acidic residues; that stretch reads PPKEQKPKEAKKEAPKEAPKPKAVEK. The region spanning 258-418 is the EF-1-gamma C-terminal domain; that stretch reads PKNPLDLLPP…ESLLDAKCFK (161 aa).

As to quaternary structure, EF-1 is composed of four subunits: alpha, beta, delta, and gamma.

In terms of biological role, probably plays a role in anchoring the complex to other cellular components. This chain is Elongation factor 1-gamma 2, found in Oryza sativa subsp. japonica (Rice).